A 257-amino-acid polypeptide reads, in one-letter code: UPF0246 protein RSc2009 (257 aa).

Belongs to the UPF0246 family.

The chain is UPF0246 protein RSc2009 from Ralstonia nicotianae (strain ATCC BAA-1114 / GMI1000) (Ralstonia solanacearum).